We begin with the raw amino-acid sequence, 49 residues long: Zinc-containing ferredoxin (49 aa).

Positions 1 to 36 (GIDPNYRTSRQVVGEHQGHKVYGPVDPPKVLGIHGT) are N-terminal extension. Positions 16 and 19 each coordinate Zn(2+). Lys-29 is subject to N6-methyllysine. Residue His-34 coordinates Zn(2+). The ferredoxin stretch occupies residues 37–49 (IVXVDFDLCIADG). [3Fe-4S] cluster is bound at residue Cys-45.

Requires [3Fe-4S] cluster as cofactor. It depends on [4Fe-4S] cluster as a cofactor. Zn(2+) is required as a cofactor.

Its function is as follows. Ferredoxins are iron-sulfur proteins that transfer electrons in a wide variety of metabolic reactions. The polypeptide is Zinc-containing ferredoxin (zfx) (Acidianus infernus).